A 281-amino-acid chain; its full sequence is Proline iminopeptidase PfmaB (281 aa).

Residues 23-267 form the AB hydrolase-1 domain; that stretch reads PLVITLHGGR…NANHSVHVEK (245 aa).

This sequence belongs to the peptidase S33 family.

The catalysed reaction is Release of N-terminal proline from a peptide.. Proline iminopeptidase; part of the gene cluster that mediates the biosynthesis of dihydroxynaphthalene (DHN)-melanin, a bluish-green pigment forming a dark layer in the conidial wall that protects the conidia from UV radiations. The first step of the pathway is the production of the pentaketide 1,3,6,8-tetrahydroxynaphthalene (1,3,6,8-THN or T4HN) by the polyketide synthase PfmaE though condensation of acetyl-CoA with malonyl-CoA. T4HN is not stable and easily oxidizes into the stable form flaviolin. T4HN is also substrate of the hydroxynaphthalene reductase PfmaG to yield scytalone. The scytalone dehydratase PfmaJ then reduces scytalone to 1,3,8-THN. 1,3,8-THN is then substrate of the hydroxynaphthalene reductase PfmaI to yield vermelone. Vermelone is further converted by the multicopper oxidase PfmaD to 1,8-DHN. Finally the laccase PFICI_06862 transforms 1,8-DHN to DHN-melanin. The roles of the 5-oxoprolinase PfmaA and the proline iminopeptidase PfmaB within the cluster have not been elucidated yet. This Pestalotiopsis fici (strain W106-1 / CGMCC3.15140) protein is Proline iminopeptidase PfmaB.